Here is a 317-residue protein sequence, read N- to C-terminus: tRNA-cytidine(32) 2-sulfurtransferase (317 aa).

Positions 1-29 are disordered; sequence MNTANNTLPTAADWAGEDGAPDAADTRKI. Residues 65–70 carry the PP-loop motif motif; sequence SGGKDS. Residues Cys140, Cys143, and Cys231 each coordinate [4Fe-4S] cluster.

The protein belongs to the TtcA family. As to quaternary structure, homodimer. The cofactor is Mg(2+). [4Fe-4S] cluster is required as a cofactor.

Its subcellular location is the cytoplasm. The enzyme catalyses cytidine(32) in tRNA + S-sulfanyl-L-cysteinyl-[cysteine desulfurase] + AH2 + ATP = 2-thiocytidine(32) in tRNA + L-cysteinyl-[cysteine desulfurase] + A + AMP + diphosphate + H(+). The protein operates within tRNA modification. Its function is as follows. Catalyzes the ATP-dependent 2-thiolation of cytidine in position 32 of tRNA, to form 2-thiocytidine (s(2)C32). The sulfur atoms are provided by the cysteine/cysteine desulfurase (IscS) system. The protein is tRNA-cytidine(32) 2-sulfurtransferase of Acidovorax ebreus (strain TPSY) (Diaphorobacter sp. (strain TPSY)).